The following is a 214-amino-acid chain: A-type ATP synthase subunit D (214 aa).

It belongs to the V-ATPase D subunit family. In terms of assembly, has multiple subunits with at least A(3), B(3), C, D, E, F, H, I and proteolipid K(x).

It is found in the cell membrane. Component of the A-type ATP synthase that produces ATP from ADP in the presence of a proton gradient across the membrane. In Thermococcus kodakarensis (strain ATCC BAA-918 / JCM 12380 / KOD1) (Pyrococcus kodakaraensis (strain KOD1)), this protein is A-type ATP synthase subunit D.